Consider the following 298-residue polypeptide: MNLDFLSLSDKHNSVVVLGATATGKTSYAVGLAKELGGEIISADSRQVYKGLDLGTGKDLKEYGDVPHHLIDICTLEREYNVFDFQNDAYKAFEDIKRRKKLPIFAGGTGLYLDSLIREYELIPVPKNEELRASLAGKDLTELQKFFFEYNVPMHNKTDLENMDRLMRAIEIAEYKKTHPDAAEILNANRPDIRPLIIGLKYPREILRERIRLRLLERIKDGMIEETESLHKEGFSWERLESLGLEYKFTAQYLQGKIKSREEYVDSLYRAICQFAKRQETWFRRMEKNGVKINWVLK.

ATP is bound at residue 19-26 (GATATGKT). Substrate is bound at residue 21–26 (TATGKT). The segment at 44-47 (DSRQ) is interaction with substrate tRNA.

The protein belongs to the IPP transferase family. In terms of assembly, monomer. Mg(2+) is required as a cofactor.

It carries out the reaction adenosine(37) in tRNA + dimethylallyl diphosphate = N(6)-dimethylallyladenosine(37) in tRNA + diphosphate. Functionally, catalyzes the transfer of a dimethylallyl group onto the adenine at position 37 in tRNAs that read codons beginning with uridine, leading to the formation of N6-(dimethylallyl)adenosine (i(6)A). This chain is tRNA dimethylallyltransferase 2, found in Treponema denticola (strain ATCC 35405 / DSM 14222 / CIP 103919 / JCM 8153 / KCTC 15104).